The following is a 271-amino-acid chain: MNRIQQTFAALAEQGRKGLIPFITAGDPDPAKTVEFMHALAEGGADVIELGVPFSDPMADGPVIQRSSERALARGVTLKSVLADVKRFRETDPKTPVVLMGYANPIERMGVDTFAAEAQAAGVDGVLVVDYPPEEAGVFAEKMRAAQIDPIFLLAPTSTDERIADVGKIASGYVYYVSLKGVTGAGNLDVSSIAGKIPAIKSRVPVPVGVGFGIRDAETARAVAEVSDAVVIGSRLVQLLESAAPEGAAAALKTFIAELRAALDGAGKTAR.

Active-site proton acceptor residues include E49 and D60.

It belongs to the TrpA family. As to quaternary structure, tetramer of two alpha and two beta chains.

It carries out the reaction (1S,2R)-1-C-(indol-3-yl)glycerol 3-phosphate + L-serine = D-glyceraldehyde 3-phosphate + L-tryptophan + H2O. The protein operates within amino-acid biosynthesis; L-tryptophan biosynthesis; L-tryptophan from chorismate: step 5/5. In terms of biological role, the alpha subunit is responsible for the aldol cleavage of indoleglycerol phosphate to indole and glyceraldehyde 3-phosphate. This chain is Tryptophan synthase alpha chain, found in Burkholderia lata (strain ATCC 17760 / DSM 23089 / LMG 22485 / NCIMB 9086 / R18194 / 383).